Reading from the N-terminus, the 172-residue chain is Large ribosomal subunit protein uL10 (172 aa).

Belongs to the universal ribosomal protein uL10 family. As to quaternary structure, part of the ribosomal stalk of the 50S ribosomal subunit. The N-terminus interacts with L11 and the large rRNA to form the base of the stalk. The C-terminus forms an elongated spine to which L12 dimers bind in a sequential fashion forming a multimeric L10(L12)X complex.

Forms part of the ribosomal stalk, playing a central role in the interaction of the ribosome with GTP-bound translation factors. This Acidothermus cellulolyticus (strain ATCC 43068 / DSM 8971 / 11B) protein is Large ribosomal subunit protein uL10.